Consider the following 627-residue polypeptide: (+)-3-carene synthase 1, chloroplastic (627 aa).

A chloroplast-targeting transit peptide spans 1–36 (MSVISIVPLASKPCLYKSFISSTHEPKALRRPISTV). 3 residues coordinate Mg(2+): aspartate 378, aspartate 382, and aspartate 530. The DDXXD motif signature appears at 378-382 (DDMYD).

This sequence belongs to the terpene synthase family. Tpsd subfamily. Mg(2+) is required as a cofactor. The cofactor is Mn(2+).

The protein resides in the plastid. It is found in the chloroplast. It catalyses the reaction (2E)-geranyl diphosphate = (+)-car-3-ene + diphosphate. The protein operates within terpene metabolism; oleoresin biosynthesis. Functionally, terpene synthase (TPS) involved in the biosynthesis of monoterpene natural products included in conifer oleoresin secretions and volatile emissions; these compounds contribute to biotic and abiotic stress defense against herbivores (e.g. insect attack by white pine weevil P.strobi) and pathogens. Catalyzes the conversion of (2E)-geranyl diphosphate (GPP) to (+)-car-3-ene. The polypeptide is (+)-3-carene synthase 1, chloroplastic (Picea sitchensis (Sitka spruce)).